The chain runs to 1388 residues: Endoribonuclease Dicer homolog 2 (1388 aa).

Positions 31 to 210 (ALEKAIKQNT…DSYWKKIHEL (180 aa)) constitute a Helicase ATP-binding domain. Residue 44-51 (LETGSGKT) participates in ATP binding. Residues 152–155 (DECH) carry the DECH box motif. Positions 380 to 544 (LGYSSLENIR…PLPDDSDEPL (165 aa)) constitute a Helicase C-terminal domain. Residues 559 to 645 (SVSLIYHYCS…VPDMVVAETV (87 aa)) enclose the Dicer dsRNA-binding fold domain. The PAZ domain occupies 805–935 (TSHEVLEKHE…LPPELCHVIL (131 aa)). 2 consecutive RNase III domains span residues 962 to 1113 (AYNL…SEGG) and 1149 to 1296 (VGYM…VDSG). The Mg(2+) site is built by E1188, D1282, and E1285. Positions 1315–1384 (TPETVKLHPV…YKEVLNLLKN (70 aa)) constitute a DRBM domain.

It belongs to the helicase family. Dicer subfamily. The cofactor is Mg(2+). It depends on Mn(2+) as a cofactor.

Its subcellular location is the nucleus. The protein localises to the cytoplasm. Its function is as follows. Ribonuclease (RNase) III involved in RNA-mediated post-transcriptional gene silencing (PTGS). Involved in the processing of natural small interfering RNAs (nat-siRNAs, derived from cis-natural antisense transcripts) by cleaving small dsRNAs into 24 nucleotide nat-siRNAs. Plays an essential role in transitive silencing of transgenes by processing secondary siRNAs. This pathway, which requires DCL4 and RDR6, amplifies silencing by using the target RNA as substrate to generate secondary siRNAs, providing an efficient mechanism for long-distance silencing. May participate with DCL3 in the production of 24 nucleotide repeat-associated siRNAs (ra-siRNAs) which derive from heterochromatin and DNA repeats such as transposons. Plays a role in antiviral RNA silencing. Involved in the production of viral siRNAs derived from the turnip crinkle virus (TCV) and tobacco rattle virus (TRV). Targeted by the viral silencing suppressor (VSR) protein 2b of the cucumber mosaic virus (CMV) that inactivates DCL2 function in RNA silencing. Does not seem to be involved in microRNAs (miRNAs) processing. In Arabidopsis thaliana (Mouse-ear cress), this protein is Endoribonuclease Dicer homolog 2.